The primary structure comprises 387 residues: Eukaryotic translation initiation factor 3 subunit M (387 aa).

The 160-residue stretch at 181 to 340 (LSSKVMIELL…HKVHITSTMH (160 aa)) folds into the PCI domain.

This sequence belongs to the eIF-3 subunit M family. Component of the eukaryotic translation initiation factor 3 (eIF-3) complex. The eIF-3 complex interacts with pix.

It is found in the cytoplasm. Its subcellular location is the golgi apparatus. Component of the eukaryotic translation initiation factor 3 (eIF-3) complex, which is involved in protein synthesis of a specialized repertoire of mRNAs and, together with other initiation factors, stimulates binding of mRNA and methionyl-tRNAi to the 40S ribosome. The eIF-3 complex specifically targets and initiates translation of a subset of mRNAs involved in cell proliferation. The protein is Eukaryotic translation initiation factor 3 subunit M of Drosophila erecta (Fruit fly).